A 1222-amino-acid chain; its full sequence is Serine/threonine-protein kinase WNK4 (1222 aa).

The segment covering 1 to 17 has biased composition (polar residues); sequence MLAPRNTETGVPMSQTE. Positions 1–165 are disordered; the sequence is MLAPRNTETG…DTETQAVATS (165 aa). The span at 90–101 shows a compositional bias: low complexity; sequence AGPTRSPPSSSK. A Phosphoserine modification is found at S95. Positions 135 to 152 are enriched in basic and acidic residues; sequence EPPRVPDAAARERRREQE. Residues K154 and K172 each participate in a glycyl lysine isopeptide (Lys-Gly) (interchain with G-Cter in ubiquitin) cross-link. The 259-residue stretch at 171–429 folds into the Protein kinase domain; that stretch reads LKFDIEIGRG…IQDLLAHAFF (259 aa). S181 serves as a coordination point for ATP. Residues K183, K223, and K238 each participate in a glycyl lysine isopeptide (Lys-Gly) (interchain with G-Cter in ubiquitin) cross-link. ATP is bound by residues 251-254 and K301; that span reads TELM. D318 acts as the Proton acceptor in catalysis. K325 is covalently cross-linked (Glycyl lysine isopeptide (Lys-Gly) (interchain with G-Cter in ubiquitin)). 2 positions are modified to phosphoserine; by autocatalysis: S328 and S332. Residues K384, K390, K447, and K451 each participate in a glycyl lysine isopeptide (Lys-Gly) (interchain with G-Cter in ubiquitin) cross-link. Positions 525–562 are disordered; sequence RELEVLPPDSGPPPATVSLAPGPPSAFPPEPEEPEADQ. A compositionally biased stretch (pro residues) spans 533–553; that stretch reads DSGPPPATVSLAPGPPSAFPP. Residues 554 to 564 form an interaction with KLHL3 region; the sequence is EPEEPEADQHQ. S572 carries the phosphoserine modification. Disordered regions lie at residues 626 to 659, 747 to 809, 877 to 896, and 927 to 976; these read RSGP…MRKN, DAGP…GAPF, SYPQ…SPPS, and SPGL…AQPL. 4 stretches are compositionally biased toward low complexity: residues 627 to 638, 757 to 769, 793 to 807, and 877 to 890; these read SGPGSDFSPGDS, ALSP…ALPA, STSP…SPGA, and SYPQ…SLPV. The segment covering 935–944 has biased composition (pro residues); it reads PPAPPGPLPS. The span at 953–963 shows a compositional bias: polar residues; sequence DQESLSAQTAE. K990 is covalently cross-linked (Glycyl lysine isopeptide (Lys-Gly) (interchain with G-Cter in ubiquitin)). Positions 996-999 match the RFXV motif motif; it reads RFQV. Positions 1000–1087 are disordered; sequence TSSKEPAEPP…SSPILSHPSP (88 aa). A Phosphoserine modification is found at S1014. Residues 1014–1032 show a composition bias toward low complexity; that stretch reads SPTLSRSLKLPSPPLTSES. A compositionally biased stretch (basic and acidic residues) spans 1044-1056; sequence ETREALAESDRAA. Glycyl lysine isopeptide (Lys-Gly) (interchain with G-Cter in ubiquitin) cross-links involve residues K1123, K1136, and K1137. Positions 1166–1222 are disordered; sequence RRLSKGSFPTSRRNSLQRSDLPGPGIMRRNSLSGSSTGSQEQRASKGVTFAGDIGRM. 2 stretches are compositionally biased toward polar residues: residues 1172 to 1183 and 1195 to 1207; these read SFPTSRRNSLQR and NSLS…SQEQ. Phosphoserine is present on S1196.

The protein belongs to the protein kinase superfamily. Ser/Thr protein kinase family. WNK subfamily. Interacts with the C-terminal region of KCNJ1. Interacts with WNK1 and WNK3. Interacts with KLHL3. Mg(2+) serves as cofactor. Post-translationally, autophosphorylated at Ser-328 and Ser-332, promoting its activation. Phosphorylated by WNK1 and WNK3. Phosphorylated at Ser-572 in a MAP3K15/ASK3-dependent process in response to osmotic stress or hypotonic low-chloride stimulation. Ubiquitinated by the BCR(KLHL3) complex, leading to its degradation. Also ubiquitinated by the BCR(KLHL2) complex. Locates to the distal convoluted tubule, the medullary collecting duct and the cortical collecting duct of the kidney. Expressed in pancreatic duct.

It is found in the cell junction. The protein localises to the tight junction. It catalyses the reaction L-seryl-[protein] + ATP = O-phospho-L-seryl-[protein] + ADP + H(+). The enzyme catalyses L-threonyl-[protein] + ATP = O-phospho-L-threonyl-[protein] + ADP + H(+). Its activity is regulated as follows. Activation requires autophosphorylation of Ser-328 and Ser-332. Autophosphorylation and subsequent activation is inhibited by increases in intracellular ionic strength: Cl(-) potently inhibits WNK4 kinase activity via direct binding. Also inhibited by K(+) ions. Its function is as follows. Serine/threonine-protein kinase component of the WNK4-SPAK/OSR1 kinase cascade, which acts as a key regulator of ion transport in the distal nephron and blood pressure. The WNK4-SPAK/OSR1 kinase cascade is composed of WNK4, which mediates phosphorylation and activation of downstream kinases OXSR1/OSR1 and STK39/SPAK. Following activation, OXSR1/OSR1 and STK39/SPAK catalyze phosphorylation of ion cotransporters, such as SLC12A1/NKCC2, SLC12A2/NKCC1, SLC12A3/NCC, SLC12A5/KCC2 or SLC12A6/KCC3, regulating their activity. Acts as a molecular switch that regulates the balance between renal salt reabsorption and K(+) secretion by modulating the activities of renal transporters and channels, including the Na-Cl cotransporter SLC12A3/NCC and the K(+) channel, KCNJ1/ROMK. Regulates NaCl reabsorption in the distal nephron by activating the thiazide-sensitive Na-Cl cotransporter SLC12A3/NCC in distal convoluted tubule cells of kidney: activates SLC12A3/NCC in a OXSR1/OSR1- and STK39/SPAK-dependent process. Also acts as a scaffold protein independently of its protein kinase activity: negatively regulates cell membrane localization of various transporters and channels (CFTR, KCNJ1/ROMK, SLC4A4, SLC26A9 and TRPV4) by clathrin-dependent endocytosis. Also inhibits the activity of the epithelial Na(+) channel (ENaC) SCNN1A, SCNN1B, SCNN1D in a inase-independent mechanism. May also phosphorylate NEDD4L. In Mus musculus (Mouse), this protein is Serine/threonine-protein kinase WNK4.